An 846-amino-acid chain; its full sequence is SLIT and NTRK-like protein 2 (846 aa).

The signal sequence occupies residues 1-21 (MLSGVWFLSVLTVAGILQTES). At 22–622 (RKTAKDICKI…LHTEVPLSVL (601 aa)) the chain is on the extracellular side. 2 disulfides stabilise this stretch: Cys-29–Cys-35 and Cys-33–Cys-46. LRR repeat units lie at residues 63 to 84 (RIYQLFLNGNLLTRLYPNEFVN), 87 to 108 (NAVTLHLGNNGLQEIRPGAFSG), 111 to 132 (TLKRLHLNNNKLEVLREDTFLG), 135 to 156 (SLEYLQADYNYISTIEAGAFSK), 159 to 180 (KLKVLILNDNLLLSLPSNVFRF), and 182 to 203 (LLTHLDLRGNRLKVMPFAGVLE). N-linked (GlcNAc...) asparagine glycosylation is present at Asn-84. The required for interaction with PTPRD stretch occupies residues 167 to 215 (DNLLLSLPSNVFRFVLLTHLDLRGNRLKVMPFAGVLEHIGGIMEIQLEE). An LRRCT 1 domain is found at 216–265 (NPWNCTCDLLPLKAWLDTITVFVGEIVCETPFRLHGKDVTQLTRQDLCPR). N-linked (GlcNAc...) asparagine glycosylation is present at Asn-219. 2 disulfides stabilise this stretch: Cys-220–Cys-243 and Cys-222–Cys-263. The segment at 261–322 (DLCPRKSASG…TPRVTVSKDR (62 aa)) is disordered. Low complexity-rich tracts occupy residues 267–276 (SASGDSSQRS) and 285–300 (RLTPTTNPALNPTRAP). The region spanning 332–374 (QTKSPVALTCPSSCVCTSQSSDNGLNVNCQERKFTNISDLQPK) is the LRRNT domain. LRR repeat units follow at residues 377 to 398 (SPKKLYLTGNYLQTVYKNDLLE), 401 to 422 (SLDLLHLGNNRIAVIQEGAFTN), 425 to 446 (SLRRLYLNGNYLEVLYPSMFDG), 449 to 470 (SLQYLYLEYNVIKEIKPLTFDA), 473 to 494 (NLQLLFLNNNLLRSLPDNIFGG), and 496 to 517 (ALTRLNLRNNHFSHLPVKGVLD). Asn-422 is a glycosylation site (N-linked (GlcNAc...) asparagine). The LRRCT 2 domain occupies 530 to 581 (NPWDCTCDIMGLKDWTEHANSPVIINEVTCESPAKHAGEILKFLGREAICPE). The helical transmembrane segment at 623–643 (ILGLLVVFILSVCFGAGLFVF) threads the bilayer. Residues 644–846 (VLKRRKGVPN…LEKQTAISQL (203 aa)) are Cytoplasmic-facing. Position 757 is a phosphotyrosine (Tyr-757).

It belongs to the SLITRK family. As to quaternary structure, interacts with PTPRD; this interaction is PTPRD splicing-dependent and may induce pre-synaptic differentiation. Interacts with NTRK2. As to expression, in the adult, significant expression is detected only in the brain. Broadly expressed in embryonic brain with highest expression in ventricular layer, subventricular zone, cortical plate, pyramidal layer of hippocampus, subicular neuroepithelium, thalamus, hypothalamus and spinal cord.

Its subcellular location is the membrane. It localises to the cell membrane. It is found in the cell projection. The protein localises to the dendrite. Functionally, it is involved in synaptogenesis. Promotes excitatory synapse differentiation. Suppresses neurite outgrowth. Involved in the negative regulation of NTRK2. The protein is SLIT and NTRK-like protein 2 (Slitrk2) of Mus musculus (Mouse).